Reading from the N-terminus, the 63-residue chain is High-potential iron-sulfur protein (63 aa).

[4Fe-4S] cluster is bound by residues Cys23, Cys26, Cys41, and Cys56.

This sequence belongs to the high-potential iron-sulfur protein (HiPIP) family. As to quaternary structure, homodimer.

Functionally, specific class of high-redox-potential 4Fe-4S ferredoxins. Functions in anaerobic electron transport in most purple and in some other photosynthetic bacteria and in at least one genus (Paracoccus) of halophilic, denitrifying bacteria. The polypeptide is High-potential iron-sulfur protein (hip) (Rhodocyclus tenuis (Rhodospirillum tenue)).